The chain runs to 373 residues: NK1 transcription factor-related protein 1 (373 aa).

Disordered stretches follow at residues 49–74 (ALPAESRETSPRHEPVPAGAPPTVHR), 149–231 (SDFT…RRAR), and 281–328 (KWKK…SMHT). The span at 53 to 63 (ESRETSPRHEP) shows a compositional bias: basic and acidic residues. The segment covering 168 to 177 (EESSALTGNN) has biased composition (polar residues). Low complexity predominate over residues 196–210 (GQQTQQSSSNGQNHQ). The homeobox DNA-binding region spans 227 to 286 (PRRARTAFTYEQLVALENKFKSTRYLSVCERLNLALSLSLTETQVKIWFQNRRTKWKKQN). The span at 296-310 (SGGGGGNGPSNGLGG) shows a compositional bias: gly residues.

It belongs to the NK-1 homeobox family.

The protein localises to the nucleus. May participate in the energy homeostasis regulation. This Danio rerio (Zebrafish) protein is NK1 transcription factor-related protein 1.